Reading from the N-terminus, the 705-residue chain is Elongation factor G (705 aa).

The tr-type G domain occupies 8–291 (EKVRNIGIMA…AVVEYLPSPI (284 aa)). Residues 17–24 (AHIDAGKT), 90–94 (DTPGH), and 144–147 (NKMD) each bind GTP.

Belongs to the TRAFAC class translation factor GTPase superfamily. Classic translation factor GTPase family. EF-G/EF-2 subfamily.

It is found in the cytoplasm. Functionally, catalyzes the GTP-dependent ribosomal translocation step during translation elongation. During this step, the ribosome changes from the pre-translocational (PRE) to the post-translocational (POST) state as the newly formed A-site-bound peptidyl-tRNA and P-site-bound deacylated tRNA move to the P and E sites, respectively. Catalyzes the coordinated movement of the two tRNA molecules, the mRNA and conformational changes in the ribosome. The protein is Elongation factor G of Chloroherpeton thalassium (strain ATCC 35110 / GB-78).